The chain runs to 327 residues: Phenylalanine--tRNA ligase alpha subunit (327 aa).

Glutamate 252 provides a ligand contact to Mg(2+).

The protein belongs to the class-II aminoacyl-tRNA synthetase family. Phe-tRNA synthetase alpha subunit type 1 subfamily. In terms of assembly, tetramer of two alpha and two beta subunits. The cofactor is Mg(2+).

Its subcellular location is the cytoplasm. The enzyme catalyses tRNA(Phe) + L-phenylalanine + ATP = L-phenylalanyl-tRNA(Phe) + AMP + diphosphate + H(+). This chain is Phenylalanine--tRNA ligase alpha subunit, found in Aliivibrio fischeri (strain ATCC 700601 / ES114) (Vibrio fischeri).